The following is a 428-amino-acid chain: Zinc metalloproteinase nas-27 (428 aa).

The signal sequence occupies residues 1 to 17; sequence MQILPIFFPLLITSLHA. The propeptide occupies 18–57; it reads IPRGRRAVRNRNEGDINSLVGVGQYLYQGDIAVVKSRARR. Residues 58 to 255 form the Peptidase M12A domain; the sequence is AVIRQKHKKW…SRMNVLYNCH (198 aa). Disulfide bonds link Cys-99-Cys-254, Cys-120-Cys-141, Cys-258-Cys-276, Cys-281-Cys-290, Cys-306-Cys-339, and Cys-366-Cys-386. His-150 is a Zn(2+) binding site. The active site involves Glu-151. Zn(2+) is bound by residues His-154 and His-160. An N-linked (GlcNAc...) asparagine glycan is attached at Asn-181. Residues 250–291 form the EGF-like domain; that stretch reads VLYNCHERCANTLNRCQQGGYPAPSDCSQCVCPDGFGGNFCE. A CUB domain is found at 306–428; sequence CGGVLWASET…LDFNIEYRAV (123 aa). An N-linked (GlcNAc...) asparagine glycan is attached at Asn-377.

Zn(2+) serves as cofactor.

The protein resides in the secreted. Functionally, metalloprotease. The chain is Zinc metalloproteinase nas-27 (nas-27) from Caenorhabditis elegans.